The following is a 336-amino-acid chain: F-box protein PP2-B1 (336 aa).

Residues M1 to D22 are disordered. Residues S9–S18 are compositionally biased toward gly residues. Positions A29–F75 constitute an F-box domain.

As to quaternary structure, part of a SCF (ASK-cullin-F-box) protein ligase complex. Interacts with SKP1A/ASK1 and SPK1B/ASK2.

The protein localises to the nucleus. It participates in protein modification; protein ubiquitination. Component of SCF(ASK-cullin-F-box) E3 ubiquitin ligase complexes, which may mediate the ubiquitination and subsequent proteasomal degradation of target proteins. This Arabidopsis thaliana (Mouse-ear cress) protein is F-box protein PP2-B1 (PP2B1).